The following is a 208-amino-acid chain: Protein-L-isoaspartate O-methyltransferase (208 aa).

The active site involves S59.

Belongs to the methyltransferase superfamily. L-isoaspartyl/D-aspartyl protein methyltransferase family.

It localises to the cytoplasm. The enzyme catalyses [protein]-L-isoaspartate + S-adenosyl-L-methionine = [protein]-L-isoaspartate alpha-methyl ester + S-adenosyl-L-homocysteine. Functionally, catalyzes the methyl esterification of L-isoaspartyl residues in peptides and proteins that result from spontaneous decomposition of normal L-aspartyl and L-asparaginyl residues. It plays a role in the repair and/or degradation of damaged proteins. The protein is Protein-L-isoaspartate O-methyltransferase of Photorhabdus laumondii subsp. laumondii (strain DSM 15139 / CIP 105565 / TT01) (Photorhabdus luminescens subsp. laumondii).